Here is a 419-residue protein sequence, read N- to C-terminus: Ribosome biogenesis protein WDR12 homolog (419 aa).

Residues 10 to 91 (VQVHLKTKQE…EDAIEIEYVE (82 aa)) form a ubiquitin-like (UBL) domain region. 7 WD repeats span residues 103 to 141 (LHDDWVSAVKASGKWILTGCYDNTLNIWTNKGKHILTIP), 142 to 184 (GHTA…NTVE), 191 to 230 (GHERGVDSVSVSPDGQRFATGSWDTMLKVWSAELEDAGEG), 249 to 287 (GHRESISAVQWMDASTLLTGSWDHTLKVWDLSLEGIKAE), 289 to 328 (STNKSIFDASYSKLNHLILTASADKNLRLYDSRTNQGSVV), 334 to 374 (GHNA…APLY), and 378 to 416 (GHGEKVLDIDWTNPKYIVSGGSDNTVRVFKSRKALVENM).

It belongs to the WD repeat WDR12/YTM1 family.

The protein localises to the nucleus. The protein resides in the nucleolus. It localises to the nucleoplasm. In terms of biological role, required for maturation of ribosomal RNAs and formation of the large ribosomal subunit. The chain is Ribosome biogenesis protein WDR12 homolog from Drosophila persimilis (Fruit fly).